Reading from the N-terminus, the 849-residue chain is Protein lap1 (849 aa).

17 LRR repeats span residues 18-39, 41-62, 64-85, 87-108, 110-131, 133-155, 156-177, 179-200, 202-224, 225-246, 248-269, 271-292, 294-315, 317-338, 340-362, 363-384, and 386-407; these read VIDKLDYSNTPLTDFPEVWQHE, TLEELYLSTTRLQALPPQLFYC, GLRVLHVNSNNLESIPQAIGSL, QLQHLDLNRNLIVNVPEEIKSC, HLTHLDLSCNSLQRLPDAITSL, SLQELLLNETYLEFLPANFGRLV, NLRILELRLNNLMTLPKSMVRL, NLQRLDIGGNEFTELPEVVGEL, SLRELWIDFNQIRRVSANIGKLR, DLQHFEANGNLLDTLPSELSNW, NVEVLSICSNSLEAFPFSVGML, SLVTFKCESNGLTELPDSISYL, QLEELVLSHNKLIRLPSTIGML, SLRFLFADDNQLRQLPDELCSC, QLSVLSVANNQLSALPQNIGNLS, KMKVLNVVNNYINALPVSMLNL, and NLTSMWLSDNQSQPLVPLQYLD. Residues 716-752 form a disordered region; that stretch reads NNISNNLEPNPEEEDQELDDTMSQHSLNSTATNNTSK. Acidic residues predominate over residues 725–735; the sequence is NPEEEDQELDD. A compositionally biased stretch (polar residues) spans 736-752; sequence TMSQHSLNSTATNNTSK. A PDZ domain is found at 770–849; the sequence is VKQVTLKWEN…TVMNIMLSRK (80 aa).

Belongs to the LAP (LRR and PDZ) protein family.

In terms of biological role, may have a role in assembling adherens junctions. The protein is Protein lap1 of Drosophila melanogaster (Fruit fly).